The primary structure comprises 303 residues: Oxygen-dependent coproporphyrinogen-III oxidase (303 aa).

S94 lines the substrate pocket. A divalent metal cation-binding residues include H98 and H108. Residue H108 is the Proton donor of the active site. Position 110–112 (110–112 (NVR)) interacts with substrate. The a divalent metal cation site is built by H147 and H177. Positions 242-277 (YVEFNLVYDRGTLFGLQTGGRTESILMSLPPLVRWE) are important for dimerization. 260 to 262 (GGR) provides a ligand contact to substrate.

This sequence belongs to the aerobic coproporphyrinogen-III oxidase family. In terms of assembly, homodimer. A divalent metal cation is required as a cofactor.

The protein resides in the cytoplasm. The catalysed reaction is coproporphyrinogen III + O2 + 2 H(+) = protoporphyrinogen IX + 2 CO2 + 2 H2O. It functions in the pathway porphyrin-containing compound metabolism; protoporphyrin-IX biosynthesis; protoporphyrinogen-IX from coproporphyrinogen-III (O2 route): step 1/1. Its function is as follows. Involved in the heme biosynthesis. Catalyzes the aerobic oxidative decarboxylation of propionate groups of rings A and B of coproporphyrinogen-III to yield the vinyl groups in protoporphyrinogen-IX. The chain is Oxygen-dependent coproporphyrinogen-III oxidase from Saccharophagus degradans (strain 2-40 / ATCC 43961 / DSM 17024).